We begin with the raw amino-acid sequence, 491 residues long: Probable cytosol aminopeptidase (491 aa).

Mn(2+) contacts are provided by Lys-261 and Asp-266. The active site involves Lys-273. Mn(2+)-binding residues include Asp-284, Asp-343, and Glu-345. Residue Arg-347 is part of the active site.

This sequence belongs to the peptidase M17 family. Mn(2+) serves as cofactor.

Its subcellular location is the cytoplasm. The catalysed reaction is Release of an N-terminal amino acid, Xaa-|-Yaa-, in which Xaa is preferably Leu, but may be other amino acids including Pro although not Arg or Lys, and Yaa may be Pro. Amino acid amides and methyl esters are also readily hydrolyzed, but rates on arylamides are exceedingly low.. It carries out the reaction Release of an N-terminal amino acid, preferentially leucine, but not glutamic or aspartic acids.. Presumably involved in the processing and regular turnover of intracellular proteins. Catalyzes the removal of unsubstituted N-terminal amino acids from various peptides. This chain is Probable cytosol aminopeptidase, found in Stenotrophomonas maltophilia (strain K279a).